The chain runs to 388 residues: Deoxyuridine 5'-triphosphate nucleotidohydrolase (388 aa).

Over residues 77–88 (EEKYDKEQHPGE) the composition is skewed to basic and acidic residues. Disordered regions lie at residues 77 to 96 (EEKY…SPLP) and 336 to 388 (THTP…PRHP). Acidic residues predominate over residues 351 to 363 (VDDDVDETEEDEK).

It belongs to the dUTPase family. It depends on Mg(2+) as a cofactor.

It is found in the virion. The enzyme catalyses dUTP + H2O = dUMP + diphosphate + H(+). The protein operates within pyrimidine metabolism; dUMP biosynthesis; dUMP from dCTP (dUTP route): step 2/2. Its function is as follows. Involved in nucleotide metabolism: produces dUMP, the immediate precursor of thymidine nucleotides and decreases the intracellular concentration of dUTP to avoid uracil incorporation into viral DNA. In Human cytomegalovirus (strain AD169) (HHV-5), this protein is Deoxyuridine 5'-triphosphate nucleotidohydrolase.